Consider the following 131-residue polypeptide: uncharacterized protein (131 aa).

3 consecutive transmembrane segments (helical) span residues 13-35 (RFIKFVFPFPATGIYFHGYTFPI), 60-79 (LVALPILMLQPSMYVCTYVC), and 100-119 (LFEIVLYYLSVCTPYWWNIT).

It is found in the membrane. This is an uncharacterized protein from Saccharomyces cerevisiae (strain ATCC 204508 / S288c) (Baker's yeast).